Here is a 211-residue protein sequence, read N- to C-terminus: Large ribosomal subunit protein bL17c (211 aa).

The transit peptide at 1-95 (MAIPMSMAMA…IVDGGGRIYA (95 aa)) directs the protein to the chloroplast.

This sequence belongs to the bacterial ribosomal protein bL17 family. Part of the 50S ribosomal subunit.

Its subcellular location is the plastid. It localises to the chloroplast. Functionally, this protein binds directly to 23S ribosomal RNA. The chain is Large ribosomal subunit protein bL17c (RPL17) from Arabidopsis thaliana (Mouse-ear cress).